A 244-amino-acid polypeptide reads, in one-letter code: INO80 complex subunit E (244 aa).

A coiled-coil region spans residues 10-54 (DYKKKYRNLKRKLKFLIYEHECFQEELRKAQRKLLKVSRDKSFLL). The disordered stretch occupies residues 63–236 (VDEDSSDSDA…SGDDALDGDD (174 aa)). Low complexity predominate over residues 99 to 115 (PPLGGAPSPSSLSLPPS). The span at 157–171 (RPKREKRPRLPRKLK) shows a compositional bias: basic residues. Glycyl lysine isopeptide (Lys-Gly) (interchain with G-Cter in SUMO2) cross-links involve residues lysine 159 and lysine 171. Pro residues predominate over residues 202–212 (PLPPPKMPPPT).

Component of the chromatin remodeling INO80 complex; specifically part of a complex module associated with the N-terminus of INO80.

Its subcellular location is the nucleus. Functionally, putative regulatory component of the chromatin remodeling INO80 complex which is involved in transcriptional regulation, DNA replication and probably DNA repair. The polypeptide is INO80 complex subunit E (INO80E) (Homo sapiens (Human)).